A 545-amino-acid polypeptide reads, in one-letter code: T-complex protein 1 subunit gamma (545 aa).

Met1 carries the N-acetylmethionine modification. A disordered region spans residues 1–24 (MMGHRPVLVLSQNTKRESGRKVQS). Residue Ser11 is modified to Phosphoserine. A Glycyl lysine isopeptide (Lys-Gly) (interchain with G-Cter in SUMO2) cross-link involves residue Lys15. Gly42 provides a ligand contact to ADP. Gly42 lines the ATP pocket. Residue Asp93 coordinates Mg(2+). Residues Gly94, Thr95, Thr96, Ser97, Thr162, and Lys163 each coordinate ADP. Residues Gly94, Thr95, and Thr96 each coordinate ATP. Phosphoserine is present on Ser170. Lys222 carries the N6-acetyllysine modification. Ser243 and Ser244 each carry phosphoserine. Residue Tyr247 is modified to Phosphotyrosine. Glycyl lysine isopeptide (Lys-Gly) (interchain with G-Cter in SUMO2) cross-links involve residues Lys248 and Lys249. Ser252 is subject to Phosphoserine. The cysteines at positions 366 and 372 are disulfide-linked. Lys381 participates in a covalent cross-link: Glycyl lysine isopeptide (Lys-Gly) (interchain with G-Cter in SUMO2). ADP is bound at residue Gly411. Gly411 provides a ligand contact to ATP. Phosphothreonine occurs at positions 430 and 459. ADP-binding residues include Gly482, Glu483, Glu497, and Lys502. Residue Gly482 participates in ATP binding. Glu497 provides a ligand contact to ATP. Residues 526–545 (HKKKGDDQSRQGGAPDAGQE) form a disordered region.

This sequence belongs to the TCP-1 chaperonin family. In terms of assembly, component of the chaperonin-containing T-complex (TRiC), a hexadecamer composed of two identical back-to-back stacked rings enclosing a protein folding chamber. Each ring is made up of eight different subunits: TCP1/CCT1, CCT2, CCT3, CCT4, CCT5, CCT6A/CCT6, CCT7, CCT8. Interacts with PACRG. Interacts with DNAAF4. Interacts with DLEC1.

It is found in the cytoplasm. It catalyses the reaction ATP + H2O = ADP + phosphate + H(+). Its function is as follows. Component of the chaperonin-containing T-complex (TRiC), a molecular chaperone complex that assists the folding of actin, tubulin and other proteins upon ATP hydrolysis. The TRiC complex mediates the folding of WRAP53/TCAB1, thereby regulating telomere maintenance. As part of the TRiC complex may play a role in the assembly of BBSome, a complex involved in ciliogenesis regulating transports vesicles to the cilia. The protein is T-complex protein 1 subunit gamma (CCT3) of Bos taurus (Bovine).